Here is a 452-residue protein sequence, read N- to C-terminus: Ribosomal protein uS12 methylthiotransferase RimO (452 aa).

Residues 3–122 (LTVGLISLGC…LPEIITQVMD (120 aa)) enclose the MTTase N-terminal domain. Positions 12, 48, 85, 162, 166, and 169 each coordinate [4Fe-4S] cluster. The 245-residue stretch at 148–392 (LTPPHTAYIK…TLLLARLASE (245 aa)) folds into the Radical SAM core domain. The TRAM domain occupies 395–452 (QEQIGRQIRVLVDAPGVARTEWDAPDIDGTVSVPLTLPVGQFATVTVTDAVAYELTAE).

It belongs to the methylthiotransferase family. RimO subfamily. [4Fe-4S] cluster serves as cofactor.

It is found in the cytoplasm. It carries out the reaction L-aspartate(89)-[ribosomal protein uS12]-hydrogen + (sulfur carrier)-SH + AH2 + 2 S-adenosyl-L-methionine = 3-methylsulfanyl-L-aspartate(89)-[ribosomal protein uS12]-hydrogen + (sulfur carrier)-H + 5'-deoxyadenosine + L-methionine + A + S-adenosyl-L-homocysteine + 2 H(+). Its function is as follows. Catalyzes the methylthiolation of an aspartic acid residue of ribosomal protein uS12. This chain is Ribosomal protein uS12 methylthiotransferase RimO, found in Akkermansia muciniphila (strain ATCC BAA-835 / DSM 22959 / JCM 33894 / BCRC 81048 / CCUG 64013 / CIP 107961 / Muc).